A 176-amino-acid chain; its full sequence is Nucleoside triphosphate/diphosphate phosphatase (176 aa).

The active-site Proton donor is Arg-23. 6 residues coordinate Mg(2+): Asn-87, Asp-103, Asp-105, Asp-107, Asp-120, and Glu-123.

This sequence belongs to the Ntdp family. Mg(2+) serves as cofactor.

It carries out the reaction a ribonucleoside 5'-triphosphate + H2O = a ribonucleoside 5'-diphosphate + phosphate + H(+). The catalysed reaction is a ribonucleoside 5'-diphosphate + H2O = a ribonucleoside 5'-phosphate + phosphate + H(+). Functionally, has nucleoside phosphatase activity towards nucleoside triphosphates and nucleoside diphosphates. This is Nucleoside triphosphate/diphosphate phosphatase (yjjG) from Lactococcus lactis subsp. lactis (strain IL1403) (Streptococcus lactis).